The chain runs to 347 residues: Phosphoribosylformylglycinamidine cyclo-ligase (347 aa).

It belongs to the AIR synthase family.

Its subcellular location is the cytoplasm. It carries out the reaction 2-formamido-N(1)-(5-O-phospho-beta-D-ribosyl)acetamidine + ATP = 5-amino-1-(5-phospho-beta-D-ribosyl)imidazole + ADP + phosphate + H(+). It functions in the pathway purine metabolism; IMP biosynthesis via de novo pathway; 5-amino-1-(5-phospho-D-ribosyl)imidazole from N(2)-formyl-N(1)-(5-phospho-D-ribosyl)glycinamide: step 2/2. This Alkalilimnicola ehrlichii (strain ATCC BAA-1101 / DSM 17681 / MLHE-1) protein is Phosphoribosylformylglycinamidine cyclo-ligase.